A 204-amino-acid polypeptide reads, in one-letter code: COBRA-like protein 5 (204 aa).

An N-terminal signal peptide occupies residues 1-24 (MESLFSTMIVLLLVSFSCLISTEA). N-linked (GlcNAc...) asparagine glycosylation is found at Asn31 and Asn195.

This sequence belongs to the COBRA family. Expressed in roots, stems, leaves, flowers and siliques.

The polypeptide is COBRA-like protein 5 (COBL5) (Arabidopsis thaliana (Mouse-ear cress)).